We begin with the raw amino-acid sequence, 200 residues long: Charged multivesicular body protein 6-A (200 aa).

A lipid anchor (N-myristoyl glycine) is attached at Gly2. A coiled-coil region spans residues 9–102 (RRSRVTEQDK…FAQIEMKVIE (94 aa)). The segment at 166 to 200 (EDLELPEAPSEPLPDTIPEKQAVKNKPKPQMIAAS) is disordered. A Type-2 MIT-interacting motif motif is present at residues 168–179 (LELPEAPSEPLP).

Belongs to the SNF7 family. Probable core component of the endosomal sorting required for transport complex III (ESCRT-III). ESCRT-III components are thought to multimerize to form a flat lattice on the perimeter membrane of the endosome.

Its subcellular location is the endomembrane system. The protein localises to the late endosome membrane. Its function is as follows. Probable core component of the endosomal sorting required for transport complex III (ESCRT-III) which is involved in multivesicular bodies (MVBs) formation and sorting of endosomal cargo proteins into MVBs. MVBs contain intraluminal vesicles (ILVs) that are generated by invagination and scission from the limiting membrane of the endosome and mostly are delivered to lysosomes enabling degradation of membrane proteins, such as stimulated growth factor receptors, lysosomal enzymes and lipids. In the ESCRT-III complex, it probably serves as an acceptor for the ESCRT-II complex on endosomal membranes. In Xenopus laevis (African clawed frog), this protein is Charged multivesicular body protein 6-A (chmp6-a).